Consider the following 546-residue polypeptide: uncharacterized protein (546 aa).

A run of 10 helical transmembrane segments spans residues 106–126 (WWIV…SSVY), 145–165 (TLGS…FAPL), 172–192 (FIIY…GGCA), 231–251 (YVLP…PIIG), 263–283 (WTFW…FIFF), 332–352 (LIFT…VYII), 375–395 (GLSF…TPFI), 416–436 (LYPL…FAWT), 444–464 (WIVP…VFFV), and 510–530 (WATS…FIFY).

It belongs to the major facilitator superfamily. CAR1 family.

The protein resides in the endoplasmic reticulum membrane. This is an uncharacterized protein from Schizosaccharomyces pombe (strain 972 / ATCC 24843) (Fission yeast).